Consider the following 331-residue polypeptide: D-lactate dehydrogenase (331 aa).

NAD(+) contacts are provided by residues His-155 to Ile-156, Asp-175, Val-206 to Pro-207, Asn-212, Ala-233 to Arg-235, and Asp-259. Arg-235 is a catalytic residue. Glu-264 is a catalytic residue. His-296 (proton donor) is an active-site residue.

Belongs to the D-isomer specific 2-hydroxyacid dehydrogenase family. As to quaternary structure, homodimer.

The enzyme catalyses (R)-lactate + NAD(+) = pyruvate + NADH + H(+). This chain is D-lactate dehydrogenase, found in Leuconostoc mesenteroides subsp. cremoris.